Consider the following 626-residue polypeptide: Chaperone protein HtpG (626 aa).

The a; substrate-binding stretch occupies residues Met-1–Arg-341. The b stretch occupies residues Glu-342–Lys-552. A c region spans residues Val-553–Val-626.

This sequence belongs to the heat shock protein 90 family. Homodimer.

It localises to the cytoplasm. Functionally, molecular chaperone. Has ATPase activity. The sequence is that of Chaperone protein HtpG from Bacillus velezensis (strain DSM 23117 / BGSC 10A6 / LMG 26770 / FZB42) (Bacillus amyloliquefaciens subsp. plantarum).